Reading from the N-terminus, the 303-residue chain is Probable cell division protein WhiA (303 aa).

The segment at residues 272-303 (SIQQLADSLSTPLTKSGVNHRLRKINKIADEL) is a DNA-binding region (H-T-H motif).

This sequence belongs to the WhiA family.

Its function is as follows. Involved in cell division and chromosome segregation. The sequence is that of Probable cell division protein WhiA from Streptococcus pneumoniae (strain Hungary19A-6).